The chain runs to 306 residues: Nucleotide-binding protein RSal33209_2275 (306 aa).

29–36 (GMSGAGRS) is a binding site for ATP. 80–83 (DVRG) serves as a coordination point for GTP.

This sequence belongs to the RapZ-like family.

Functionally, displays ATPase and GTPase activities. This is Nucleotide-binding protein RSal33209_2275 from Renibacterium salmoninarum (strain ATCC 33209 / DSM 20767 / JCM 11484 / NBRC 15589 / NCIMB 2235).